The primary structure comprises 65 residues: Trypsin inhibitor (65 aa).

In terms of assembly, homotrimer.

The polypeptide is Trypsin inhibitor (Zea mays (Maize)).